We begin with the raw amino-acid sequence, 115 residues long: NADH-ubiquinone oxidoreductase chain 3 (115 aa).

A run of 3 helical transmembrane segments spans residues 3–23 (IMLTLLTNVTLASLLVLIAFW), 55–75 (FFLVAITFLLFDLEIALLLPL), and 86–106 (TMLTMALFLLILLAASLAYEW).

Belongs to the complex I subunit 3 family. As to quaternary structure, core subunit of respiratory chain NADH dehydrogenase (Complex I) which is composed of 45 different subunits. Interacts with TMEM186. Interacts with TMEM242.

Its subcellular location is the mitochondrion inner membrane. The catalysed reaction is a ubiquinone + NADH + 5 H(+)(in) = a ubiquinol + NAD(+) + 4 H(+)(out). In terms of biological role, core subunit of the mitochondrial membrane respiratory chain NADH dehydrogenase (Complex I) which catalyzes electron transfer from NADH through the respiratory chain, using ubiquinone as an electron acceptor. Essential for the catalytic activity of complex I. In Sus scrofa (Pig), this protein is NADH-ubiquinone oxidoreductase chain 3.